Reading from the N-terminus, the 248-residue chain is Floral homeotic protein AGAMOUS (248 aa).

The MADS-box domain maps to 19–73; sequence RGKIEIKRIENTTNRQVTFCKRRNGLLKKAYELSVLCDAEVALIVFSSRGRLYEY. Positions 103–193 constitute a K-box domain; the sequence is AQYYQQEASK…RAKIAETERA (91 aa). Positions 196 to 219 are disordered; it reads QQQQQQMNLMPGSSSYELVPPPHQ. Over residues 202-211 the composition is skewed to polar residues; the sequence is MNLMPGSSSY.

The protein resides in the nucleus. Probable transcription factor involved in regulating genes that determines stamen and carpel development in wild-type flowers. The chain is Floral homeotic protein AGAMOUS (AG1) from Nicotiana tabacum (Common tobacco).